Reading from the N-terminus, the 141-residue chain is Putative pre-16S rRNA nuclease (141 aa).

This sequence belongs to the YqgF nuclease family.

It localises to the cytoplasm. Its function is as follows. Could be a nuclease involved in processing of the 5'-end of pre-16S rRNA. This Dictyoglomus turgidum (strain DSM 6724 / Z-1310) protein is Putative pre-16S rRNA nuclease.